Here is a 710-residue protein sequence, read N- to C-terminus: Adenylosuccinate synthetase (710 aa).

Disordered stretches follow at residues 1 to 53 (MPVR…PQEA) and 84 to 110 (DEPP…SGRS). Polar residues-rich tracts occupy residues 10–27 (YNNS…STTA) and 101–110 (ANASNSSGRS). GTP is bound by residues 180–186 (GDEGKGK) and 210–212 (GHT). The Proton acceptor role is filled by D181. Mg(2+) contacts are provided by D181 and G210. IMP is bound by residues 181–184 (DEGK), 208–211 (NAGH), T295, K309, Q421, T437, and K567. H211 acts as the Proton donor in catalysis. 563–569 (AVTKKPR) contacts substrate. GTP is bound by residues R569 and 697-699 (GNG).

It belongs to the adenylosuccinate synthetase family. Homodimer. Mg(2+) serves as cofactor.

The protein resides in the cytoplasm. It catalyses the reaction IMP + L-aspartate + GTP = N(6)-(1,2-dicarboxyethyl)-AMP + GDP + phosphate + 2 H(+). It functions in the pathway purine metabolism; AMP biosynthesis via de novo pathway; AMP from IMP: step 1/2. In terms of biological role, plays an important role in the salvage pathway for purine nucleotide biosynthesis. Catalyzes the first committed step in the biosynthesis of AMP from IMP. The polypeptide is Adenylosuccinate synthetase (ADSS) (Leishmania donovani).